The primary structure comprises 578 residues: Zinc finger protein 248 (578 aa).

The KRAB domain maps to 8–78; it reads VSFKDVCVDF…LEKGFPSQDP (71 aa). The C2H2-type 1; degenerate zinc-finger motif lies at 239–263; the sequence is TVCKYNECGRTFIESLKLNISQRPH. Lys340 is covalently cross-linked (Glycyl lysine isopeptide (Lys-Gly) (interchain with G-Cter in SUMO2)). 7 C2H2-type zinc fingers span residues 379 to 401, 407 to 429, 435 to 457, 463 to 485, 491 to 513, 519 to 542, and 547 to 569; these read FECGECGKTFWEKSNLTQHQRTH, YECTECGKAFCQKPHLTNHQRTH, YECKQCGKTFCVKSNLTEHQRTH, YECNACGKSFCHRSALTVHQRTH, FICNECGKSFCVKSNLIVHQRTH, YKCNECGKTFCEKSALTKHQRTHT, and YECNACGKTFSQRSVLTKHQRIH.

It belongs to the krueppel C2H2-type zinc-finger protein family.

Its subcellular location is the nucleus. Its function is as follows. May be involved in transcriptional regulation. The sequence is that of Zinc finger protein 248 (ZNF248) from Pongo abelii (Sumatran orangutan).